A 256-amino-acid chain; its full sequence is MISAQNLVYSLQGRRLTDNVSLTFPGGEIVAILGPNGAGKSTLLRQLTGYLQPDSGECRLFNKPLNEWSITELAKHRAVMRQNSHMAFPFSVQEVIQMGRHPHRTGNQDNETAQIMALCDCQALANRDYRQLSGGEQQRVQLARLLVQLWEPTPSPKWLFLDEPTSALDIHHQQHLFRLLRQLVHERQFNVCCILHDLNLAAHYADRVVLMQKGKVIANGKPQDVLTQQALTMLYGADITVLKDPANHSPLIVLDH.

The 237-residue stretch at 2 to 238 (ISAQNLVYSL…QALTMLYGAD (237 aa)) folds into the ABC transporter domain. Position 34–41 (34–41 (GPNGAGKS)) interacts with ATP.

Belongs to the ABC transporter superfamily. Heme (hemin) importer (TC 3.A.1.14.5) family. In terms of assembly, the complex is composed of two ATP-binding proteins (HmuV), two transmembrane proteins (HmuU) and a solute-binding protein (HmuT).

Its subcellular location is the cell inner membrane. Functionally, part of the ABC transporter complex HmuTUV involved in hemin import. Responsible for energy coupling to the transport system. The polypeptide is Hemin import ATP-binding protein HmuV (Escherichia coli O157:H7).